A 370-amino-acid chain; its full sequence is MPQEESAPRMDTPSSEEPLDKQNRKLEDQEEEMGFKELDGLREALANLRGLSEEDKSERAMLCSRIQEQSQLICILKRRSDEALERCQTLELLNTELEEKRLLEAEELKAKNQQAQKLEERFMTLASNHELMIRFKDEHKRQNAKLREENEKLRLENDQLFSPALKAQEAKVVQLTAQSEALAKELETLQRKYAHDVCQAQAREQELLELQNRQACAHTEETEQLRMQLQSLQQQQQEALQQTAKAEQAHSQQNQELRARLQTVTREKEELLLLSMERGRVLQNKQAEIRQLEEKLKMADVARRHALERFEQEAVAVNSNLRVRELQRRVDGIQAAYDELRLQSEAFKKHSLDLLSKERELNAKLRHLFP.

Positions 1-38 (MPQEESAPRMDTPSSEEPLDKQNRKLEDQEEEMGFKEL) are disordered. Thr12 is subject to Phosphothreonine. A compositionally biased stretch (basic and acidic residues) spans 18-38 (PLDKQNRKLEDQEEEMGFKEL). Residues 19–346 (LDKQNRKLED…YDELRLQSEA (328 aa)) are a coiled coil.

This sequence belongs to the CCDC89 family. Interacts with HEY1.

The protein localises to the cytoplasm. Its subcellular location is the nucleus. This is Coiled-coil domain-containing protein 89 from Bos taurus (Bovine).